The primary structure comprises 239 residues: tRNA (guanine-N(1)-)-methyltransferase (239 aa).

S-adenosyl-L-methionine contacts are provided by residues Gly-112 and 132–137 (IGDYVL).

Belongs to the RNA methyltransferase TrmD family. Homodimer.

It is found in the cytoplasm. The enzyme catalyses guanosine(37) in tRNA + S-adenosyl-L-methionine = N(1)-methylguanosine(37) in tRNA + S-adenosyl-L-homocysteine + H(+). In terms of biological role, specifically methylates guanosine-37 in various tRNAs. The sequence is that of tRNA (guanine-N(1)-)-methyltransferase from Rhodospirillum rubrum (strain ATCC 11170 / ATH 1.1.1 / DSM 467 / LMG 4362 / NCIMB 8255 / S1).